Reading from the N-terminus, the 702-residue chain is Polyribonucleotide nucleotidyltransferase (702 aa).

Residues Asp485 and Asp491 each coordinate Mg(2+). One can recognise a KH domain in the interval 552–611 (PKTSTLQIDPEKIRDVIGAGGKVINKIIADTGVKIDIKEDGLVYVSSAESEGVKEAVKII). The S1 motif domain occupies 621–689 (GEIYLGKVTK…SQGRINLSRK (69 aa)).

Belongs to the polyribonucleotide nucleotidyltransferase family. It depends on Mg(2+) as a cofactor.

The protein resides in the cytoplasm. The catalysed reaction is RNA(n+1) + phosphate = RNA(n) + a ribonucleoside 5'-diphosphate. Involved in mRNA degradation. Catalyzes the phosphorolysis of single-stranded polyribonucleotides processively in the 3'- to 5'-direction. The protein is Polyribonucleotide nucleotidyltransferase of Clostridium perfringens (strain 13 / Type A).